The primary structure comprises 252 residues: Probable transcriptional regulatory protein A1E_02520 (252 aa).

It belongs to the TACO1 family.

The protein localises to the cytoplasm. In Rickettsia canadensis (strain McKiel), this protein is Probable transcriptional regulatory protein A1E_02520.